The chain runs to 281 residues: Beta-lactamase (281 aa).

The N-terminal stretch at 1-24 is a signal peptide; it reads MKKLIFLIVIALVLSACNSNSSHA. Ser63 (acyl-ester intermediate) is an active-site residue. 225–227 is a binding site for substrate; sequence KSG.

It belongs to the class-A beta-lactamase family.

The enzyme catalyses a beta-lactam + H2O = a substituted beta-amino acid. The protein is Beta-lactamase (blaZ) of Staphylococcus aureus.